Reading from the N-terminus, the 591-residue chain is Transcription factor COE1 (591 aa).

At methionine 1 the chain carries N-acetylmethionine. Over residues 1-14 the composition is skewed to polar residues; that stretch reads MFGIQESIQRSGSS. The segment at 1-21 is disordered; that stretch reads MFGIQESIQRSGSSMKEEPLG. A Glycyl lysine isopeptide (Lys-Gly) (interchain with G-Cter in SUMO1); alternate cross-link involves residue lysine 16. Lysine 16 participates in a covalent cross-link: Glycyl lysine isopeptide (Lys-Gly) (interchain with G-Cter in SUMO2); alternate. The segment at 63–66 is interaction with DNA; sequence RKSN. The segment at 151-170 adopts a C5-type zinc-finger fold; that stretch reads CRVLLTHEIMCSRCCDKKSC. 2 interaction with DNA regions span residues 197-204 and 236-239; these read NCLKNAGN and NNSK. Residues 262 to 345 form the IPT/TIG domain; it reads PCIKAISPSE…KGTPGRFIYT (84 aa). The disordered stretch occupies residues 457 to 480; the sequence is GFTRNSSSVSPHGYVPSTTPQQTN.

Belongs to the COE family. Homodimer. Interacts with ZNF423 and ZNF521, leading to prevent EBF1 to bind DNA and activate target genes. Interacts with CCR4-NOT component CNOT3. As to quaternary structure, (Microbial infection) Interacts with Epstein-barr virus protein EBNA2.

Its subcellular location is the nucleus. In terms of biological role, key pioneer transcription factor of B-cell specification and commitment. Recognizes variations of the palindromic sequence 5'-ATTCCCNNGGGAATT-3'. Operates in a transcription factor network to activate B-cell-specific genes and repress genes associated with alternative cell fates. For instance, positively regulates many B-cell specific genes including BCR or CD40 while repressing genes that direct cells into alternative lineages, including GATA3 and TCF7 for the T-cell lineage. In addition to its role during lymphopoiesis, controls the thermogenic gene program in adipocytes during development and in response to environmental cold. Functionally, (Microbial infection) Acts as a chromatin anchor for Epstein-Barr virus EBNA2 to mediate the assembly of EBNA2 chromatin complexes in B-cells. In addition, binds to the viral LMP1 proximal promoter and promotes its expression during latency. The protein is Transcription factor COE1 (EBF1) of Homo sapiens (Human).